The following is a 161-amino-acid chain: 2-C-methyl-D-erythritol 2,4-cyclodiphosphate synthase (161 aa).

Residues Asp-10 and His-12 each contribute to the a divalent metal cation site. Residues 10 to 12 and 36 to 37 contribute to the 4-CDP-2-C-methyl-D-erythritol 2-phosphate site; these read DVH and HS. Residue His-44 participates in a divalent metal cation binding. 4-CDP-2-C-methyl-D-erythritol 2-phosphate-binding positions include 58 to 60, 63 to 67, and Arg-144; these read DIG and FSDTD.

The protein belongs to the IspF family. Homotrimer. It depends on a divalent metal cation as a cofactor.

The enzyme catalyses 4-CDP-2-C-methyl-D-erythritol 2-phosphate = 2-C-methyl-D-erythritol 2,4-cyclic diphosphate + CMP. Its pathway is isoprenoid biosynthesis; isopentenyl diphosphate biosynthesis via DXP pathway; isopentenyl diphosphate from 1-deoxy-D-xylulose 5-phosphate: step 4/6. Involved in the biosynthesis of isopentenyl diphosphate (IPP) and dimethylallyl diphosphate (DMAPP), two major building blocks of isoprenoid compounds. Catalyzes the conversion of 4-diphosphocytidyl-2-C-methyl-D-erythritol 2-phosphate (CDP-ME2P) to 2-C-methyl-D-erythritol 2,4-cyclodiphosphate (ME-CPP) with a corresponding release of cytidine 5-monophosphate (CMP). This Burkholderia cenocepacia (strain HI2424) protein is 2-C-methyl-D-erythritol 2,4-cyclodiphosphate synthase.